We begin with the raw amino-acid sequence, 433 residues long: WD repeat domain phosphoinositide-interacting protein 1 (433 aa).

Positions 127–132 match the Nuclear receptor interaction motif; it reads LLKTLL. 2 WD repeats span residues 136 to 177 and 180 to 220; these read RNPH…CECT and AHDS…KLYE. Positions 221–224 match the L/FRRG motif motif; that stretch reads FRRG. WD repeat units lie at residues 226-265 and 296-346; these read KRYV…ERSE and DRAF…GGEC.

It belongs to the WD repeat PROPPIN family.

Its subcellular location is the golgi apparatus. It localises to the trans-Golgi network. It is found in the endosome. The protein localises to the cytoplasmic vesicle. The protein resides in the clathrin-coated vesicle. Its subcellular location is the preautophagosomal structure membrane. It localises to the cytoplasm. It is found in the cytoskeleton. Its function is as follows. Component of the autophagy machinery that controls the major intracellular degradation process by which cytoplasmic materials are packaged into autophagosomes and delivered to lysosomes for degradation. Plays an important role in starvation- and calcium-mediated autophagy, as well as in mitophagy. Functions downstream of the ulk1 and PI3-kinases that produce phosphatidylinositol 3-phosphate (PtdIns3P) on membranes of the endoplasmic reticulum once activated. Binds phosphatidylinositol 3-phosphate (PtdIns3P), and maybe other phosphoinositides including PtdIns3,5P2 and PtdIns5P, and is recruited to phagophore assembly sites at the endoplasmic reticulum membranes. There, it assists wipi2 in the recruitment of atg12-atg5-atg16l1, a complex that directly controls the elongation of the nascent autophagosomal membrane. Together with wdr45/wipi4, promotes atg2 (atg2a or atg2b)-mediated lipid transfer by enhancing atg2-association with phosphatidylinositol 3-monophosphate (PI3P)-containing membranes. In Xenopus laevis (African clawed frog), this protein is WD repeat domain phosphoinositide-interacting protein 1 (wipi1).